The chain runs to 644 residues: MASNKILGIDLGTTNSAFAVMEGDEPEIIANAEGDRTTPSVVAFADDGERLVGKPAKNQAVQNPDRTIQSIKRHMGEDGYTVEIGDEEYTPEQVSAMILQKIKRDAEEYLGDDVEKAVITVPAYFNDKQRQATKDAGEIAGFEVERIVNEPTAASMAYGLDDESDQTVLVYDLGGGTFDVSVLDLGGGVYEVVATNGDNDLGGDDWDEALIDHLAKEFKNNHGIDLREDRQALQRLKDAAEEAKIELSSKKETTVNLPFITATDSGPVHLEQSITRATFENLTSDLIERTVNPTEQALSDADYSKSDIDEVILVGGSTRMPQVQEQVEALVGQEPKKNVNPDEAVALGAAVQGGVLSGDVDDIVLLDVTPLSLGIEVKGGLFERLIEKNTTIPTEESKVFTTAADNQTSVNVRVFQGEREIAEENELLGAFQLSGIPPAPAGTPQIEVSFNIDENGIVNVEAEDQGSGNAESITIEGGVGLSDEEIDQMQEEAEKHKEEDEARRERIEARNEAETSIQRAETLLEENEEELDDDELVADIEAAIEDVEEVLEDEDADTDEIESATEALTEELQEIGKQMYEGQAAQAGPGGAGGAAGAGPGGMGGMGGAAGPGGAGGAGPGGADADDEEYVDADFEDVDDEDDA.

Disordered regions lie at residues 490 to 533 and 570 to 644; these read QEEA…ELDD and EELQ…EDDA. A compositionally biased stretch (basic and acidic residues) spans 492–513; that stretch reads EAEKHKEEDEARRERIEARNEA. Residues 523 to 533 show a composition bias toward acidic residues; it reads LLEENEEELDD. Positions 588 to 622 are enriched in gly residues; it reads GPGGAGGAAGAGPGGMGGMGGAAGPGGAGGAGPGG. Residues 624–644 are compositionally biased toward acidic residues; sequence DADDEEYVDADFEDVDDEDDA.

It belongs to the heat shock protein 70 family.

Functionally, acts as a chaperone. This is Chaperone protein DnaK from Halorubrum lacusprofundi (strain ATCC 49239 / DSM 5036 / JCM 8891 / ACAM 34).